The primary structure comprises 154 residues: Large ribosomal subunit protein uL22 (154 aa).

The protein belongs to the universal ribosomal protein uL22 family. As to quaternary structure, part of the 50S ribosomal subunit.

Its function is as follows. This protein binds specifically to 23S rRNA. It makes multiple contacts with different domains of the 23S rRNA in the assembled 50S subunit and ribosome. The globular domain of the protein is located near the polypeptide exit tunnel on the outside of the subunit, while an extended beta-hairpin is found that lines the wall of the exit tunnel in the center of the 70S ribosome. The chain is Large ribosomal subunit protein uL22 from Methanosphaera stadtmanae (strain ATCC 43021 / DSM 3091 / JCM 11832 / MCB-3).